Reading from the N-terminus, the 644-residue chain is DNA gyrase subunit B (644 aa).

Residues Cys-429–Pro-543 enclose the Toprim domain. Residues Glu-435, Asp-508, and Asp-510 each contribute to the Mg(2+) site.

This sequence belongs to the type II topoisomerase GyrB family. As to quaternary structure, heterotetramer, composed of two GyrA and two GyrB chains. In the heterotetramer, GyrA contains the active site tyrosine that forms a transient covalent intermediate with DNA, while GyrB binds cofactors and catalyzes ATP hydrolysis. Requires Mg(2+) as cofactor. Mn(2+) serves as cofactor. The cofactor is Ca(2+).

The protein localises to the cytoplasm. The enzyme catalyses ATP-dependent breakage, passage and rejoining of double-stranded DNA.. Its function is as follows. A type II topoisomerase that negatively supercoils closed circular double-stranded (ds) DNA in an ATP-dependent manner to modulate DNA topology and maintain chromosomes in an underwound state. Negative supercoiling favors strand separation, and DNA replication, transcription, recombination and repair, all of which involve strand separation. Also able to catalyze the interconversion of other topological isomers of dsDNA rings, including catenanes and knotted rings. Type II topoisomerases break and join 2 DNA strands simultaneously in an ATP-dependent manner. The sequence is that of DNA gyrase subunit B from Staphylococcus aureus (strain COL).